The following is a 178-amino-acid chain: Long polar fimbria protein A (178 aa).

Positions 1–24 (MEFLMKKVVFALSALAVVSTSAFA) are cleaved as a signal peptide.

This sequence belongs to the fimbrial protein family.

It localises to the fimbrium. The polypeptide is Long polar fimbria protein A (lpfA) (Salmonella typhimurium (strain LT2 / SGSC1412 / ATCC 700720)).